The primary structure comprises 1037 residues: Glycine dehydrogenase (decarboxylating) A, mitochondrial (1037 aa).

Residues 1-66 constitute a mitochondrion transit peptide; sequence MERARRLANK…LNGFGSQVRT (66 aa). An N6-(pyridoxal phosphate)lysine modification is found at K773.

Belongs to the GcvP family. As to quaternary structure, homodimer. The glycine cleavage system is composed of four proteins: P, T, L and H. Pyridoxal 5'-phosphate is required as a cofactor. As to expression, expressed in leaves, stems and roots.

The protein resides in the mitochondrion. The enzyme catalyses N(6)-[(R)-lipoyl]-L-lysyl-[glycine-cleavage complex H protein] + glycine + H(+) = N(6)-[(R)-S(8)-aminomethyldihydrolipoyl]-L-lysyl-[glycine-cleavage complex H protein] + CO2. Its function is as follows. The glycine cleavage system catalyzes the degradation of glycine. The P protein binds the alpha-amino group of glycine through its pyridoxal phosphate cofactor; CO(2) is released and the remaining methylamine moiety is then transferred to the lipoamide cofactor of the H protein. The protein is Glycine dehydrogenase (decarboxylating) A, mitochondrial (GDCSPA) of Flaveria pringlei.